The following is a 636-amino-acid chain: DNA gyrase subunit B (636 aa).

In terms of domain architecture, Toprim spans 421–535; sequence TELFIVEGDS…QGRVYIALPP (115 aa). The Mg(2+) site is built by Glu427, Asp500, and Asp502.

The protein belongs to the type II topoisomerase GyrB family. Heterotetramer, composed of two GyrA and two GyrB chains. In the heterotetramer, GyrA contains the active site tyrosine that forms a transient covalent intermediate with DNA, while GyrB binds cofactors and catalyzes ATP hydrolysis. Mg(2+) is required as a cofactor. It depends on Mn(2+) as a cofactor. Ca(2+) serves as cofactor.

It localises to the cytoplasm. It catalyses the reaction ATP-dependent breakage, passage and rejoining of double-stranded DNA.. Its function is as follows. A type II topoisomerase that negatively supercoils closed circular double-stranded (ds) DNA in an ATP-dependent manner to modulate DNA topology and maintain chromosomes in an underwound state. Negative supercoiling favors strand separation, and DNA replication, transcription, recombination and repair, all of which involve strand separation. Also able to catalyze the interconversion of other topological isomers of dsDNA rings, including catenanes and knotted rings. Type II topoisomerases break and join 2 DNA strands simultaneously in an ATP-dependent manner. The chain is DNA gyrase subunit B from Thermotoga maritima (strain ATCC 43589 / DSM 3109 / JCM 10099 / NBRC 100826 / MSB8).